Reading from the N-terminus, the 314-residue chain is Thymidylate synthase (314 aa).

DUMP contacts are provided by residues R21 and R176–R177. The Nucleophile role is filled by C196. DUMP is bound by residues R216–D219, N227, and H257–Y259. Position 219 (D219) interacts with (6R)-5,10-methylene-5,6,7,8-tetrahydrofolate. A (6R)-5,10-methylene-5,6,7,8-tetrahydrofolate-binding site is contributed by S313.

This sequence belongs to the thymidylate synthase family. Bacterial-type ThyA subfamily. Homodimer.

It localises to the cytoplasm. The enzyme catalyses dUMP + (6R)-5,10-methylene-5,6,7,8-tetrahydrofolate = 7,8-dihydrofolate + dTMP. It functions in the pathway pyrimidine metabolism; dTTP biosynthesis. Its function is as follows. Catalyzes the reductive methylation of 2'-deoxyuridine-5'-monophosphate (dUMP) to 2'-deoxythymidine-5'-monophosphate (dTMP) while utilizing 5,10-methylenetetrahydrofolate (mTHF) as the methyl donor and reductant in the reaction, yielding dihydrofolate (DHF) as a by-product. This enzymatic reaction provides an intracellular de novo source of dTMP, an essential precursor for DNA biosynthesis. The polypeptide is Thymidylate synthase (Listeria monocytogenes serotype 4b (strain CLIP80459)).